We begin with the raw amino-acid sequence, 196 residues long: Glycerol-3-phosphate acyltransferase (196 aa).

4 helical membrane-spanning segments follow: residues 3–23, 78–98, 112–132, and 154–174; these read NAVF…ILVS, VGVV…PVFY, VLLA…IVVF, and WLLL…LLLI.

It belongs to the PlsY family. Probably interacts with PlsX.

The protein localises to the cell inner membrane. The enzyme catalyses an acyl phosphate + sn-glycerol 3-phosphate = a 1-acyl-sn-glycero-3-phosphate + phosphate. The protein operates within lipid metabolism; phospholipid metabolism. Its function is as follows. Catalyzes the transfer of an acyl group from acyl-phosphate (acyl-PO(4)) to glycerol-3-phosphate (G3P) to form lysophosphatidic acid (LPA). This enzyme utilizes acyl-phosphate as fatty acyl donor, but not acyl-CoA or acyl-ACP. The chain is Glycerol-3-phosphate acyltransferase from Methylobacillus flagellatus (strain ATCC 51484 / DSM 6875 / VKM B-1610 / KT).